We begin with the raw amino-acid sequence, 237 residues long: MLGGSLGSRLLRGVGGSHGRFGARGVREGGAAMAAGESMAQRMVWVDLEMTGLDIEKDQIIEMACLITDSDLNILAEGPNLIIKQPDELLDSMSDWCKEHHGKSGLTKAVKESTITLQQAEYEFLSFVRQQTPPGLCPLAGNSVHEDKKFLDKYMPQFMKHLHYRIIDVSTVKELCRRWYPEEYEFAPKKAASHRALDDISESIKELQFYRNNIFKKKIDEKKRKIIENGENEKTVS.

A mitochondrion-targeting transit peptide spans 1–25 (MLGGSLGSRLLRGVGGSHGRFGARG). One can recognise an Exonuclease domain in the interval 43–207 (MVWVDLEMTG…DDISESIKEL (165 aa)). Mg(2+) contacts are provided by aspartate 47 and glutamate 49. A Phosphoserine modification is found at serine 92. Position 122 is a phosphotyrosine (tyrosine 122). Aspartate 147 is a Mg(2+) binding site. Lysine 173 carries the post-translational modification N6-acetyllysine. Histidine 194 is a catalytic residue. Aspartate 199 is a Mg(2+) binding site.

This sequence belongs to the oligoribonuclease family. In terms of assembly, homodimer. Homotetramer. Mn(2+) is required as a cofactor. It depends on Mg(2+) as a cofactor. As to expression, highly expressed in the heart and at lower levels in the lymph nodes, brain, lung, liver, spleen and thymus.

It localises to the mitochondrion intermembrane space. The protein resides in the mitochondrion matrix. The protein localises to the mitochondrion. Its subcellular location is the cytoplasm. It is found in the nucleus. Its activity is regulated as follows. Inhibited by adenosine 3',5'-bisphosphate. In terms of biological role, 3'-to-5'exoribonuclease that preferentially degrades DNA and RNA oligonucleotides composed of only two nucleotides. Binds and degrades longer oligonucleotides with a lower affinity. Plays dual roles in mitochondria, scavenging nanoRNAs (small RNA oligonucleotides of &lt;5 nucleotides) that are produced by the degradosome and clearing short RNAs that are generated by RNA processing. Essential for correct initiation of mitochondrial transcription, degrading mitochondrial RNA dinucleotides to prevent RNA-primed transcription at non-canonical sites in the mitochondrial genome. Essential for embryonic development. Functionally, 3'-to-5'exoribonuclease that preferentially degrades DNA and RNA oligonucleotides composed of only two nucleotides. The sequence is that of Oligoribonuclease, mitochondrial (REXO2) from Homo sapiens (Human).